The sequence spans 676 residues: Polyunsaturated fatty acid lipoxygenase ALOX15B (676 aa).

The PLAT domain maps to 2–124; that stretch reads AEFRVRVSTG…TLVLQEGTAK (123 aa). Residues glycine 15, glycine 17, aspartate 39, asparagine 40, glycine 42, glutamate 44, aspartate 85, and alanine 86 each contribute to the Ca(2+) site. One can recognise a Lipoxygenase domain in the interval 125-676; that stretch reads VSWADHHPVL…PPLIENSVSI (552 aa). Fe cation contacts are provided by histidine 373, histidine 378, histidine 553, and isoleucine 676.

Belongs to the lipoxygenase family. The cofactor is Fe cation. As to expression, expressed in hair, prostate, lung, ovary, lymph node, spinal cord and cornea.

The protein resides in the nucleus. It is found in the cytoplasm. The protein localises to the cytosol. It localises to the cell membrane. Its subcellular location is the cytoskeleton. The protein resides in the membrane. It is found in the cell junction. The protein localises to the adherens junction. It localises to the focal adhesion. It catalyses the reaction (5Z,8Z,11Z,14Z)-eicosatetraenoate + O2 = (15S)-hydroperoxy-(5Z,8Z,11Z,13E)-eicosatetraenoate. It carries out the reaction (9Z,12Z)-octadecadienoate + O2 = 13-hydroperoxy-(9Z,11E)-octadecadienoate. The catalysed reaction is (5S)-hydroxy-(6E,8Z,11Z,14Z)-eicosatetraenoate + O2 = (5S)-hydroxy-(15S)-hydroperoxy-(6E,8Z,11Z,13E)-eicosatetraenoate. The enzyme catalyses (5Z,8Z,11Z,14Z)-eicosatetraenoate + O2 = 5-hydroperoxy-(6E,8Z,11Z,14Z)-eicosatetraenoate. It catalyses the reaction (5S,6R)-dihydroxy-(7E,9E,11Z,14Z)-eicosatetraenoate + O2 = (5S,6R)-dihydroxy-(15S)-hydroperoxy-(7E,9E,11Z,13E)-eicosatetraenoate. It carries out the reaction (5S)-hydroperoxy-(6E,8Z,11Z,14Z)-eicosatetraenoate + O2 = (5S,15S)-dihydroperoxy-(6E,8Z,11Z,13E)-eicosatetraenoate. The catalysed reaction is 2-(5Z,8Z,11Z,14Z-eicosatetraenoyl)-glycerol + O2 = 2-[15(S)-hydroperoxy-(5Z,8Z,11Z,13E)-eicosatetraenoyl]-glycerol. The enzyme catalyses (8S)-hydroperoxy-(5Z,9E,11Z,14Z)-eicosatetraenoate + O2 = (8S,15S)-dihydroperoxy-(5Z,9E,11Z,13E)-eicosatetraenoate. It catalyses the reaction N-(5Z,8Z,11Z,14Z)-eicosatetraenoyl-L-alanine + O2 = N-(15S)-hydroperoxy-(5Z,8Z,11Z,13E)-eicosatetraenoyl-alanine. It carries out the reaction N-(5Z,8Z,11Z,14Z)-eicosatetraenoyl-gamma-aminobutanoate + O2 = N-(15S)-hydroperoxy-(5Z,8Z,11Z,13E)-eicosatetraenoyl-gamma-aminobutanoate. The catalysed reaction is N-(5Z,8Z,11Z,14Z)-eicosatetraenoyl-glycine + O2 = N-(15S)-hydroperoxy-(5Z,8Z,11Z,13E)-eicosatetraenoyl-glycine. The enzyme catalyses N-(5Z,8Z,11Z,14Z)-eicosatetraenoyl-taurine + O2 = N-(15S)-hydroperoxy-(5Z,8Z,11Z,13E)-eicosatetraenoyl-taurine. It catalyses the reaction 2-(5Z,8Z,11Z,14Z-eicosatetraenoyl)-glycerol + O2 = 2-[12-hydroperoxy-(5Z,8Z,10E,14Z)-eicosatetraenoyl]-glycerol. It carries out the reaction 1-octadecanoyl-2-(5Z,8Z,11Z,14Z-eicosatetraenoyl)-sn-glycero-3-phosphocholine + O2 = 1-octadecanoyl-2-(15-hydroperoxy-5Z,8Z,11Z,13E-eicosatetraenoyl)-sn-glycero-3-phosphocholine. The catalysed reaction is a 1-acyl-2-(5Z,8Z,11Z,14Z-eicosatetraenoyl)-sn-glycero-3-phospho-(1D-myo-inositol) + O2 = a 1-acyl-2-(15-hydroperoxy-5Z,8Z,11Z,13E-eicosatetraenoyl)-sn-glycero-3-phospho-(1D-myo-inositol). The enzyme catalyses a 1-acyl-2-(8Z,11Z,14Z-eicosatrienoyl)-sn-glycero-3-phospho-(1D-myo-inositol) + O2 = a 1-acyl-2-(15-hydroperoxy-8Z,11Z,13E-eicosatrienoyl)-sn-glycero-3-phospho-(1D-myo-inositol). It catalyses the reaction 1-octadecanoyl-2-(5Z,8Z,11Z,14Z)-eicosatetraenoyl-sn-glycero-3-phosphoethanolamine + O2 = 1-octadecanoyl-2-(15-hydroperoxy-5Z,8Z,11Z,13E-eicosatetraenoyl)-sn-glycero-3-phosphoethanolamine. It carries out the reaction 1-octadecanoyl-2-(5Z,8Z,11Z,14Z-eicosatetraenoyl)-sn-glycero-3-phospho-(1D-myo-inositol) + O2 = 1-octadecanoyl-2-(15-hydroperoxy-5Z,8Z,11Z,13E-eicosatetraenoyl)-sn-glycero-3-phospho-(1D-myo-inositol). The catalysed reaction is (8Z,11Z,14Z)-eicosatrienoate + O2 = 15-hydroperoxy-(8Z,11Z,13E)-eicosatrienoate. The enzyme catalyses (7S)-hydroperoxy-(4Z,8E,10Z,13Z,16Z,19Z)-docosahexaenoate + O2 = (7S,17S)-dihydroperoxy-(4Z,8E,10Z,13Z,15E,19Z)-docosahexaenoate. It catalyses the reaction (5Z,8Z,11Z,14Z)-eicosatetraenoate + O2 = 15-hydroperoxy-(5Z,8Z,11Z,13E)-eicosatetraenoate. It participates in lipid metabolism; hydroperoxy eicosatetraenoic acid biosynthesis. Functionally, non-heme iron-containing dioxygenase that catalyzes the stereo-specific peroxidation of free and esterified polyunsaturated fatty acids (PUFAs) generating a spectrum of bioactive lipid mediators. It inserts peroxyl groups at C15 of arachidonate ((5Z,8Z,11Z,14Z)-eicosatetraenoate) producing (15S)-hydroperoxyeicosatetraenoate/(15S)-HPETE. Also peroxidizes linoleate ((9Z,12Z)-octadecadienoate) to 13-hydroperoxyoctadecadienoate/13-HPODE. Oxygenates arachidonyl derivatives such as 2-arachidonoylglycerol (2-AG) leading to the production and extracellular release of 15-hydroxyeicosatetraenoyl glycerol (15-HETE-G) that acts as a peroxisome proliferator-activated receptor alpha agonist. Has the ability to efficiently class-switch ALOX5 pro-inflammatory mediators into anti-inflammatory intermediates. Participates in the sequential oxidations of DHA ((4Z,7Z,10Z,13Z,16Z,19Z)-docosahexaenoate) to generate specialized pro-resolving mediators (SPMs) resolvin D5 ((7S,17S)-diHPDHA), which can actively down-regulate the immune response and have anti-aggregation properties with platelets. In addition to free PUFAs hydrolyzed from phospholipids, it directly oxidizes PUFAs esterified to membrane-bound phospholipids. Has no detectable 8S-lipoxygenase activity on arachidonate but reacts with (8S)-HPETE to produce (8S,15S)-diHPETE. May regulate progression through the cell cycle and cell proliferation. May also regulate cytokine secretion by macrophages and therefore play a role in the immune response. May also regulate macrophage differentiation into proatherogenic foam cells. Does not convert arachidonic acid to 15S-hydroperoxyeicosatetraenoic acid/(15S)-HPETE. The sequence is that of Polyunsaturated fatty acid lipoxygenase ALOX15B from Homo sapiens (Human).